A 60-amino-acid polypeptide reads, in one-letter code: Large ribosomal subunit protein uL30 (60 aa).

The protein belongs to the universal ribosomal protein uL30 family. As to quaternary structure, part of the 50S ribosomal subunit.

In Shewanella sp. (strain MR-7), this protein is Large ribosomal subunit protein uL30.